The sequence spans 358 residues: Phosphoserine aminotransferase (358 aa).

R41 is an L-glutamate binding site. Pyridoxal 5'-phosphate contacts are provided by residues 75 to 76, W101, T150, D170, and Q193; that span reads AR. An N6-(pyridoxal phosphate)lysine modification is found at K194. 235 to 236 serves as a coordination point for pyridoxal 5'-phosphate; it reads NT.

Belongs to the class-V pyridoxal-phosphate-dependent aminotransferase family. SerC subfamily. Homodimer. The cofactor is pyridoxal 5'-phosphate.

It is found in the cytoplasm. The enzyme catalyses O-phospho-L-serine + 2-oxoglutarate = 3-phosphooxypyruvate + L-glutamate. It catalyses the reaction 4-(phosphooxy)-L-threonine + 2-oxoglutarate = (R)-3-hydroxy-2-oxo-4-phosphooxybutanoate + L-glutamate. It functions in the pathway amino-acid biosynthesis; L-serine biosynthesis; L-serine from 3-phospho-D-glycerate: step 2/3. Its pathway is cofactor biosynthesis; pyridoxine 5'-phosphate biosynthesis; pyridoxine 5'-phosphate from D-erythrose 4-phosphate: step 3/5. In terms of biological role, catalyzes the reversible conversion of 3-phosphohydroxypyruvate to phosphoserine and of 3-hydroxy-2-oxo-4-phosphonooxybutanoate to phosphohydroxythreonine. This is Phosphoserine aminotransferase from Histophilus somni (strain 129Pt) (Haemophilus somnus).